The sequence spans 62 residues: Pro-MCH variant (62 aa).

The tract at residues 23-41 is NGE-like; the sequence is GSVAFPAENGVQDTESTQE. The segment at 29–62 is disordered; that stretch reads AENGVQDTESTQEKRETGDEENSAKFPIGRRDFD. An NEI-like region spans residues 44-56; that stretch reads ETGDEENSAKFPI. Positions 60–62 are melanin-concentrating hormone-like; the sequence is DFD.

Belongs to the melanin-concentrating hormone family.

The protein is Pro-MCH variant (PMCHL1) of Pan paniscus (Pygmy chimpanzee).